The sequence spans 611 residues: Protein PES4 (611 aa).

The tract at residues 37-81 (FNPVVTPIRPDDYHEKTSRSSSSSHSDSPEFLRINNNKSGHKNGK) is disordered. A compositionally biased stretch (basic and acidic residues) spans 45 to 54 (RPDDYHEKTS). RRM domains are found at residues 91–169 (VPLF…PSLR), 179–247 (TNVF…GKKI), 303–379 (NSIF…RAQD), and 393–471 (STLF…WERQ).

The protein resides in the nucleus. This is Protein PES4 (PES4) from Saccharomyces cerevisiae (strain ATCC 204508 / S288c) (Baker's yeast).